The following is a 205-amino-acid chain: uncharacterized protein (205 aa).

Positions 10–75 form a coiled coil; that stretch reads QDLLSAVDQQ…AANLMTVMTD (66 aa). The segment at 108-141 is disordered; sequence MPLPSSNTNNDQTSPPASGKTSETPKKNPTNAMF. Residues 111 to 141 show a composition bias toward polar residues; it reads PSSNTNNDQTSPPASGKTSETPKKNPTNAMF.

The protein belongs to the asfivirus K205R family.

The protein resides in the host cytoplasm. Induces host endoplasmic reticulum stress and consequently activates autophagy and NF-kappa-B signaling pathway. In turn, may induce autophagy-mediated STING1 degradation and innate immune evasion. This is an uncharacterized protein from Ornithodoros (relapsing fever ticks).